We begin with the raw amino-acid sequence, 92 residues long: Small ribosomal subunit protein uS19c (92 aa).

The protein belongs to the universal ribosomal protein uS19 family. Component of the chloroplast small ribosomal subunit (SSU). Mature 70S chloroplast ribosomes of higher plants consist of a small (30S) and a large (50S) subunit. The 30S small subunit contains 1 molecule of ribosomal RNA (16S rRNA) and 24 different proteins. The 50S large subunit contains 3 rRNA molecules (23S, 5S and 4.5S rRNA) and 33 different proteins. uS19c binds directly to 16S ribosomal RNA.

The protein resides in the plastid. The protein localises to the chloroplast. Functionally, component of the chloroplast ribosome (chloro-ribosome), a dedicated translation machinery responsible for the synthesis of chloroplast genome-encoded proteins, including proteins of the transcription and translation machinery and components of the photosynthetic apparatus. This is Small ribosomal subunit protein uS19c (rps19) from Spinacia oleracea (Spinach).